A 142-amino-acid chain; its full sequence is Putative pre-16S rRNA nuclease (142 aa).

The protein belongs to the YqgF nuclease family.

It localises to the cytoplasm. In terms of biological role, could be a nuclease involved in processing of the 5'-end of pre-16S rRNA. The sequence is that of Putative pre-16S rRNA nuclease from Mycoplasmoides gallisepticum (strain R(low / passage 15 / clone 2)) (Mycoplasma gallisepticum).